Reading from the N-terminus, the 665-residue chain is Intraflagellar transport protein 70B (665 aa).

7 TPR repeats span residues 11–44, 45–78, 154–187, 189–221, 393–424, 425–457, and 459–492; these read DGEFTAVVYRLIRNARYAEAVQLLGGELQRSPRS, RAGLSLLGYCYYRLQEFALAAECYEQLGQLHPEL, TDGQINLGCLLYKEGQYEAACSKFFAALQASGYQ, DLSYNLALAYYSSRQYASALKHIAEIIERGIRQ, LTIQVQEARHNRDDEAIKKAVNEYDETMEKYI, PVLMAQAKIYWNLENYPMVEKIFRKSVEFCNDH, and VWKLNVAHVLFMQENKYKEAIGFYEPIVKKHYDN. The disordered stretch occupies residues 130–154; the sequence is PGSRSLVEQLPSREGGEESGGENET. Residues 508–535 adopt a coiled-coil conformation; it reads YIMTSQNEEAEELMRKIEKEEEQLSYDD. The TPR 8 repeat unit spans residues 544–577; it reads CIVNLVIGTLYCAKGNYDFGISRVIKSLEPYNKK.

Belongs to the TTC30/dfy-1/fleer family. Interacts with the IFT B complex components IFT27, IFT46, IFT74, IFT52, IFT57, IFT80, IFT81 and IFT88. Interacts with KIF17.

Its subcellular location is the cell projection. It is found in the cilium. In terms of biological role, required for polyglutamylation of axonemal tubulin. Plays a role in anterograde intraflagellar transport (IFT), the process by which cilia precursors are transported from the base of the cilium to the site of their incorporation at the tip. The protein is Intraflagellar transport protein 70B of Homo sapiens (Human).